A 95-amino-acid chain; its full sequence is Aspartyl/glutamyl-tRNA(Asn/Gln) amidotransferase subunit C (95 aa).

This sequence belongs to the GatC family. Heterotrimer of A, B and C subunits.

It catalyses the reaction L-glutamyl-tRNA(Gln) + L-glutamine + ATP + H2O = L-glutaminyl-tRNA(Gln) + L-glutamate + ADP + phosphate + H(+). The catalysed reaction is L-aspartyl-tRNA(Asn) + L-glutamine + ATP + H2O = L-asparaginyl-tRNA(Asn) + L-glutamate + ADP + phosphate + 2 H(+). Functionally, allows the formation of correctly charged Asn-tRNA(Asn) or Gln-tRNA(Gln) through the transamidation of misacylated Asp-tRNA(Asn) or Glu-tRNA(Gln) in organisms which lack either or both of asparaginyl-tRNA or glutaminyl-tRNA synthetases. The reaction takes place in the presence of glutamine and ATP through an activated phospho-Asp-tRNA(Asn) or phospho-Glu-tRNA(Gln). In Desulfosudis oleivorans (strain DSM 6200 / JCM 39069 / Hxd3) (Desulfococcus oleovorans), this protein is Aspartyl/glutamyl-tRNA(Asn/Gln) amidotransferase subunit C.